The chain runs to 999 residues: Sarcoplasmic/endoplasmic reticulum calcium ATPase 3 (999 aa).

Met-1 carries the N-acetylmethionine modification. Over 1–48 (MEEAHLLPAADVLRRFSVTAEGGLSPAQVTRARERYGPNELPTEEGKS) the chain is Cytoplasmic. Ser-17 is subject to Phosphoserine. Thr-19 bears the Phosphothreonine mark. Ser-25 bears the Phosphoserine mark. A helical membrane pass occupies residues 49 to 69 (LWELVLEQFEDLLVRILLLAA). Residues 70-89 (LVSFVLACFEEGEETTTAFV) lie on the Extracellular side of the membrane. A helical transmembrane segment spans residues 90–110 (EPLVIVLILVANAVVGVWQER). The Cytoplasmic segment spans residues 111 to 253 (NAENAIEALK…PERTPLQQKL (143 aa)). The chain crosses the membrane as a helical span at residues 254–273 (DEFGRQLSRAISVICMAVWV). Residues 274 to 295 (INIGHFADPAHGGSWLRGAVYY) lie on the Extracellular side of the membrane. A helical membrane pass occupies residues 296-313 (FKIAVALAVAAIPEGLPA). Residues Val-304, Ala-305, Ile-307, and Glu-309 each contribute to the Ca(2+) site. The Cytoplasmic portion of the chain corresponds to 314–757 (VITTCLALGT…EEGRAIYSNM (444 aa)). Asp-351 (4-aspartylphosphate intermediate) is an active-site residue. Positions 351 and 353 each coordinate Mg(2+). Residue Thr-353 coordinates ATP. The tract at residues 370–400 (AEAEAGTCRLHEFTISGTTYAPEGEVRQGEQ) is interaction with phospholamban 1. Phosphothreonine is present on Thr-415. ATP contacts are provided by Glu-442, Arg-489, Lys-515, Arg-560, Thr-625, Gly-626, and Asp-627. Ser-662 carries the phosphoserine modification. Arg-678 and Lys-684 together coordinate ATP. Residue Asp-703 coordinates Mg(2+). Asn-706 provides a ligand contact to ATP. The chain crosses the membrane as a helical span at residues 758-777 (KQFIRYLISSNVGEVVCIFL). Residues Asn-768 and Glu-771 each coordinate Ca(2+). Residues 778–787 (TAILGLPEAL) lie on the Extracellular side of the membrane. A helical membrane pass occupies residues 788–808 (IPVQLLWVNLVTDGLPATALG). An interaction with phospholamban 2 region spans residues 788–808 (IPVQLLWVNLVTDGLPATALG). Asn-796, Thr-799, and Asp-800 together coordinate Ca(2+). The Cytoplasmic portion of the chain corresponds to 809–828 (FNPPDLDIMEKRPRNPREAL). The helical transmembrane segment at 829–851 (ISGWLFFRYLAIGVYVGLATVAA) threads the bilayer. Residues 852–897 (ATWWFLYDAEGPQVTFYQLRNFLKCSEDNPLFTGTDCEVFESRFPT) lie on the Extracellular side of the membrane. A disulfide bond links Cys-876 and Cys-888. Residues 898 to 917 (TMALSVLVTTEMCNALNSVS) traverse the membrane as a helical segment. Glu-908 contacts Ca(2+). The Cytoplasmic portion of the chain corresponds to 918–930 (ENQSLLRMPPWLN). A helical transmembrane segment spans residues 931 to 949 (PWLLAAVAMSMALHFLILL). Residues 950–964 (VPPLPLIFQVTPLSG) lie on the Extracellular side of the membrane. Residues 965-985 (RQWVVVLQISLPVILLDEALK) traverse the membrane as a helical segment. The Cytoplasmic segment spans residues 986-999 (YLSRKHVDEEKGRQ).

Belongs to the cation transport ATPase (P-type) (TC 3.A.3) family. Type IIA subfamily. In terms of assembly, interacts with sarcolipin (SLN). Interacts with phospholamban (PLN). Interacts with myoregulin (MRLN). Interacts with DWORF. Interacts with VMP1. Interacts with TUNAR; the interaction occurs at low levels in low glucose conditions and is increased by high glucose levels. The cofactor is Mg(2+). As to expression, expressed in endothelial tissues.

The protein resides in the endoplasmic reticulum membrane. The protein localises to the sarcoplasmic reticulum membrane. The enzyme catalyses Ca(2+)(in) + ATP + H2O = Ca(2+)(out) + ADP + phosphate + H(+). Inhibited by sarcolipin (SLN), phospholamban (PLN) and myoregulin (MRLN). Enhanced by DWORF; DWORF increases activity by displacing sarcolipin (SLN), phospholamban (PLN) and myoregulin (MRLN). Functionally, this magnesium-dependent enzyme catalyzes the hydrolysis of ATP coupled with the transport of calcium. Transports calcium ions from the cytosol into the sarcoplasmic/endoplasmic reticulum lumen. Contributes to calcium sequestration involved in muscular excitation/contraction. This chain is Sarcoplasmic/endoplasmic reticulum calcium ATPase 3 (ATP2A3), found in Sus scrofa (Pig).